A 298-amino-acid chain; its full sequence is D-alanine--D-alanine ligase (298 aa).

The ATP-grasp domain maps to 97–290 (FYSLFKNYIQ…FDELINIIIK (194 aa)). 124 to 173 (PFIIKPRKSGSSKGVYIIHNENEYKFYLEKDLKEFQEVLVQEYIKGREIT) provides a ligand contact to ATP. Residues Asp-245, Glu-257, and Asn-259 each coordinate Mg(2+).

This sequence belongs to the D-alanine--D-alanine ligase family. The cofactor is Mg(2+). It depends on Mn(2+) as a cofactor.

It localises to the cytoplasm. It carries out the reaction 2 D-alanine + ATP = D-alanyl-D-alanine + ADP + phosphate + H(+). The protein operates within cell wall biogenesis; peptidoglycan biosynthesis. Its function is as follows. Cell wall formation. This is D-alanine--D-alanine ligase from Petrotoga mobilis (strain DSM 10674 / SJ95).